Consider the following 272-residue polypeptide: Shikimate dehydrogenase (NADP(+)) (272 aa).

Residues 16 to 18 and Thr-63 contribute to the shikimate site; that span reads SLS. The Proton acceptor role is filled by Lys-67. Position 79 (Glu-79) interacts with NADP(+). Shikimate contacts are provided by Asn-88 and Asp-103. NADP(+)-binding positions include 127–131, 151–156, and Ile-212; these read GAGGA and NRTMSR. Residue Tyr-214 coordinates shikimate. Gly-235 provides a ligand contact to NADP(+).

Belongs to the shikimate dehydrogenase family. As to quaternary structure, homodimer.

The enzyme catalyses shikimate + NADP(+) = 3-dehydroshikimate + NADPH + H(+). It participates in metabolic intermediate biosynthesis; chorismate biosynthesis; chorismate from D-erythrose 4-phosphate and phosphoenolpyruvate: step 4/7. Its function is as follows. Involved in the biosynthesis of the chorismate, which leads to the biosynthesis of aromatic amino acids. Catalyzes the reversible NADPH linked reduction of 3-dehydroshikimate (DHSA) to yield shikimate (SA). The sequence is that of Shikimate dehydrogenase (NADP(+)) from Staphylococcus epidermidis (strain ATCC 12228 / FDA PCI 1200).